Reading from the N-terminus, the 172-residue chain is Ly6/PLAUR domain-containing protein 6B (172 aa).

An N-terminal signal peptide occupies residues M1–A25. Residues F46–A137 enclose the UPAR/Ly6 domain. The sufficient for inhibiting alpha-7 nAChR currents stretch occupies residues F46–A140. Cystine bridges form between C48–C76, C51–C60, C69–C95, C101–C120, C106–C117, and C121–C126. S148 carries GPI-anchor amidated serine lipidation. Positions G149–L172 are cleaved as a propeptide — removed in mature form.

The protein localises to the cell membrane. Functionally, likely acts as a modulator of nicotinic acetylcholine receptors (nAChRs) activity. In vitro acts on nAChRs in a subtype- and stoichiometry-dependent manner. Modulates specifically alpha-3(3):beta-4(2) nAChRs by enhancing the sensitivity to ACh, decreasing ACh-induced maximal current response and increasing the rate of desensitization to ACh; has no effect on alpha-7 homomeric nAChRs; modulates alpha-3(2):alpha-5:beta-4(2) nAChRs in the context of CHRNA5/alpha-5 variant Asn-398 but not its wild-type sequence. However, according to another report in vitro it can weakly inhibits alpha-7 nAChRs. The polypeptide is Ly6/PLAUR domain-containing protein 6B (Lypd6b) (Mus musculus (Mouse)).